The primary structure comprises 156 residues: Snaclec A11 (156 aa).

The signal sequence occupies residues 1 to 23; sequence MGRSISVSFGLLVVFLSLSGTGA. Cystine bridges form between Cys-27–Cys-38, Cys-55–Cys-154, and Cys-129–Cys-146. The C-type lectin domain maps to 34–155; that stretch reads YDQHCYQAVD…CGQPYRFTCE (122 aa).

It belongs to the snaclec family. As to quaternary structure, heterodimer; disulfide-linked. In terms of tissue distribution, expressed by the venom gland.

It localises to the secreted. Interferes with one step of hemostasis (modulation of platelet aggregation, or coagulation cascade, for example). This Macrovipera lebetinus (Levantine viper) protein is Snaclec A11.